The chain runs to 502 residues: Mannitol dehydrogenase 2 (502 aa).

This sequence belongs to the mannitol dehydrogenase family.

The catalysed reaction is D-mannitol + NAD(+) = D-fructose + NADH + H(+). Its function is as follows. Catalyzes the NAD(H)-dependent interconversion of D-fructose and D-mannitol in the mannitol metabolic pathway. The protein is Mannitol dehydrogenase 2 of Saccharomyces cerevisiae (strain ATCC 204508 / S288c) (Baker's yeast).